The sequence spans 105 residues: Nitrogen fixation nifHD region GlnB-like protein 1 (105 aa).

It belongs to the P(II) protein family.

Its function is as follows. Could be involved in the regulation of nitrogen fixation. This Methanobacterium ivanovii protein is Nitrogen fixation nifHD region GlnB-like protein 1 (glnBA).